The chain runs to 475 residues: MALKPEKVKSSKSASTVDAKSLAEKIKKNALKQKKQAPVTEKPEEIVETTSEASQDVNSEQQFHTFSELNLVPELMEAIEKLKYTKPTPIQSGAIPHALEGKDIIGLAQTGSGKTAAFAIPILQSLWEAQRPYYALVLAPTRELAYQIKETFDALGSGMGVRSVCIVGGMDMMDQARDLMRKPHILVATPGRIMDHLENTKGFSLKSLQYLVMDEADRLLDMDFGPALDKILKVIPTKRTTYLFSATMTNKIAKLQRASLHEPVKVAVSNKYQTADNLVQSMMLVSDGYKNTFLIHLLNEFMGKSIIVFTRTCAHTQRSTLLARILGFSAVPLHGQLTQSQRLGSLNKFKSGKANILIATDVAARGLDIPSVDVVINYDIPTDSKAYIHRVGRTARAGKSGKSISLVTQYDLEMYLRIESVLGFKLPKDPSPPRDVLNALHVHVDRASAEAIKQTKDFHEKRTKKKRDDRDREER.

The segment at 30-59 (ALKQKKQAPVTEKPEEIVETTSEASQDVNS) is disordered. Over residues 48-59 (ETTSEASQDVNS) the composition is skewed to polar residues. A Q motif motif is present at residues 64 to 92 (HTFSELNLVPELMEAIEKLKYTKPTPIQS). A Helicase ATP-binding domain is found at 95 to 266 (IPHALEGKDI…RASLHEPVKV (172 aa)). 108 to 115 (AQTGSGKT) is an ATP binding site. Residues 214–217 (DEAD) carry the DEAD box motif. The Helicase C-terminal domain occupies 293 to 437 (FLIHLLNEFM…KDPSPPRDVL (145 aa)). A disordered region spans residues 451-475 (AIKQTKDFHEKRTKKKRDDRDREER).

Belongs to the DEAD box helicase family. DDX47/RRP3 subfamily.

Its subcellular location is the nucleus. Functionally, required for pre-ribosomal RNA processing. Involved in the maturation of the 35S-pre-rRNA and to its cleavage to mature 18S rRNA. The protein is ATP-dependent rRNA helicase RRP3 (RRP3) of Meyerozyma guilliermondii (strain ATCC 6260 / CBS 566 / DSM 6381 / JCM 1539 / NBRC 10279 / NRRL Y-324) (Yeast).